A 376-amino-acid chain; its full sequence is Transmembrane protein 183A (376 aa).

Disordered regions lie at residues 1–20 (MARGPGPLGRPRPDTVAMPK) and 100–127 (MDAQEESIHERTVSRKKKSKRHKEELDG). A helical membrane pass occupies residues 300–320 (LNFIFIPIVMGMIFTLFTINV).

The protein belongs to the TMEM183 family.

The protein resides in the membrane. In Homo sapiens (Human), this protein is Transmembrane protein 183A (TMEM183A).